A 469-amino-acid polypeptide reads, in one-letter code: MDLFISSQLLLLLVFCLFLFWNFKPSSQNKLPPGKTGWPIIGETLEFISCGQKGNPEKFVTQRMNKYSPDVFTTSLAGEKMVVFCGASGNKFIFSNENKLVVSWWPPAISKILTATIPSVEKSKALRSLIVEFLKPEALHKFISVMDRTTRQHFEDKWNGSTEVKAFAMSESLTFELACWLLFSINDPVQVQKLSHLFEKVKAGLLSLPLNFPGTAFNRGIKAANLIRKELSVVIKQRRSDKLQTRKDLLSHVMLSNGEGEKFFSEMDIADVVLNLLIASHDTTSSAMGSVVYFLADHPHIYAKVLTEQMEIAKSKGAEELLSWEDIKRMKYSRNVINEAMRLVPPSQGGFKVVTSKFSYANFIIPKGWKIFWSVYSTHKDPKYFKNPEEFDPSRFEGDGPMPFTFIPFGGGPRMCPGSEFARLEVLIFMHHLVTNFKWEKVFPNEKIIYTPFPFPENGLPIRLSPCTL.

Residues 3–23 (LFISSQLLLLLVFCLFLFWNF) traverse the membrane as a helical segment. Cys-416 provides a ligand contact to heme.

The protein belongs to the cytochrome P450 family. Heme serves as cofactor. As to expression, accumulates ubiquitously in all organs of plants, including roots, stems and leaves.

Its subcellular location is the membrane. It carries out the reaction (20S)-protopanaxadiol + reduced [NADPH--hemoprotein reductase] + O2 = (20S)-protopanaxatriol + oxidized [NADPH--hemoprotein reductase] + H2O + H(+). It participates in secondary metabolite biosynthesis; terpenoid biosynthesis. With respect to regulation, activated by N,N'-dicyclohexylcarbodiimide (DCCD) thus leading to increased ginsenosides accumulation. Functionally, component of the dammarane-type triterpene saponins (e.g. PPT-type ginsenosides or panaxosides) biosynthetic pathway. Catalyzes the formation of protopanaxatriol from protopanaxadiol during ginsenoside biosynthesis, a class of tetracyclic triterpenoid saponins. The chain is Protopanaxadiol 6-hydroxylase from Panax ginseng (Korean ginseng).